We begin with the raw amino-acid sequence, 203 residues long: Recombination protein RecR (203 aa).

The C4-type zinc-finger motif lies at 56-71; sequence CTVCGNVSDDERCRIC. The Toprim domain maps to 79–179; it reads SVVCVVEEPK…TVTRIASGLP (101 aa).

It belongs to the RecR family.

May play a role in DNA repair. It seems to be involved in an RecBC-independent recombinational process of DNA repair. It may act with RecF and RecO. This Mycobacterium leprae (strain TN) protein is Recombination protein RecR.